The sequence spans 309 residues: tRNA dimethylallyltransferase (309 aa).

10–17 (GPTASGKT) provides a ligand contact to ATP. 12-17 (TASGKT) contributes to the substrate binding site. 2 interaction with substrate tRNA regions span residues 35 to 38 (DSAL) and 240 to 245 (RCVGYR).

The protein belongs to the IPP transferase family. As to quaternary structure, monomer. Mg(2+) serves as cofactor.

It carries out the reaction adenosine(37) in tRNA + dimethylallyl diphosphate = N(6)-dimethylallyladenosine(37) in tRNA + diphosphate. Functionally, catalyzes the transfer of a dimethylallyl group onto the adenine at position 37 in tRNAs that read codons beginning with uridine, leading to the formation of N6-(dimethylallyl)adenosine (i(6)A). This chain is tRNA dimethylallyltransferase, found in Baumannia cicadellinicola subsp. Homalodisca coagulata.